The primary structure comprises 129 residues: Large ribosomal subunit protein bL12 (129 aa).

It belongs to the bacterial ribosomal protein bL12 family. As to quaternary structure, homodimer. Part of the ribosomal stalk of the 50S ribosomal subunit. Forms a multimeric L10(L12)X complex, where L10 forms an elongated spine to which 2 to 4 L12 dimers bind in a sequential fashion. Binds GTP-bound translation factors.

Forms part of the ribosomal stalk which helps the ribosome interact with GTP-bound translation factors. Is thus essential for accurate translation. This chain is Large ribosomal subunit protein bL12, found in Solidesulfovibrio magneticus (strain ATCC 700980 / DSM 13731 / RS-1) (Desulfovibrio magneticus).